The sequence spans 207 residues: Nuclear transcription factor Y subunit beta (207 aa).

Residues M1–F52 form an a domain region. Residues Y27–F52 form a disordered region. The segment covering M39–F52 has biased composition (basic and acidic residues). The interval R53–R142 is b domain. Residues L59 to A65 mediate DNA binding. The tract at residues V86–I97 is subunit association domain (SAD). K140 is covalently cross-linked (Glycyl lysine isopeptide (Lys-Gly) (interchain with G-Cter in ubiquitin)). A c domain region spans residues E143–S207.

It belongs to the NFYB/HAP3 subunit family. Heterotrimeric transcription factor composed of three components, NF-YA, NF-YB and NF-YC. NF-YB and NF-YC must interact and dimerize for NF-YA association and DNA binding. Interacts with C1QBP. Post-translationally, monoubiquitination at Lys-140 plays an important role in transcriptional activation by allowing the deposition of histone H3 methylations as well as histone H2B monoubiquitination at 'Lys-121'.

The protein localises to the nucleus. Functionally, component of the sequence-specific heterotrimeric transcription factor (NF-Y) which specifically recognizes a 5'-CCAAT-3' box motif found in the promoters of its target genes. NF-Y can function as both an activator and a repressor, depending on its interacting cofactors. This Bos taurus (Bovine) protein is Nuclear transcription factor Y subunit beta (NFYB).